The chain runs to 344 residues: tRNA N6-adenosine threonylcarbamoyltransferase (344 aa).

Positions 119 and 123 each coordinate Fe cation. Substrate contacts are provided by residues 141–145 (VVSGG), aspartate 174, glycine 187, aspartate 191, and asparagine 280. Aspartate 310 is a Fe cation binding site.

This sequence belongs to the KAE1 / TsaD family. Fe(2+) serves as cofactor.

The protein localises to the cytoplasm. The enzyme catalyses L-threonylcarbamoyladenylate + adenosine(37) in tRNA = N(6)-L-threonylcarbamoyladenosine(37) in tRNA + AMP + H(+). Functionally, required for the formation of a threonylcarbamoyl group on adenosine at position 37 (t(6)A37) in tRNAs that read codons beginning with adenine. Is involved in the transfer of the threonylcarbamoyl moiety of threonylcarbamoyl-AMP (TC-AMP) to the N6 group of A37, together with TsaE and TsaB. TsaD likely plays a direct catalytic role in this reaction. In Listeria monocytogenes serotype 4b (strain CLIP80459), this protein is tRNA N6-adenosine threonylcarbamoyltransferase.